The primary structure comprises 466 residues: Alpha-1A adrenergic receptor (466 aa).

The Extracellular segment spans residues 1 to 25 (MVFLSGNASDSSNCTHPPAPVNISK). 3 N-linked (GlcNAc...) asparagine glycosylation sites follow: Asn7, Asn13, and Asn22. Residues 26-51 (AILLGVILGGLILFGVLGNILVILSV) traverse the membrane as a helical segment. Residues 52–63 (ACHRHLHSVTHY) lie on the Cytoplasmic side of the membrane. The helical transmembrane segment at 64–89 (YIVNLAVADLLLTSTVLPFSAIFEIL) threads the bilayer. The Extracellular segment spans residues 90-99 (GYWAFGRVFC). A helical membrane pass occupies residues 100 to 122 (NIWAAVDVLCCTASIISLCVISI). At 123-143 (DRYIGVSYPLRYPTIVTQRRG) the chain is on the cytoplasmic side. A helical membrane pass occupies residues 144–168 (LRALLCVWAFSLVISVGPLFGWRQP). Residues 169-181 (APDDETICQINEE) lie on the Extracellular side of the membrane. The helical transmembrane segment at 182 to 205 (PGYVLFSALGSFYVPLTIILAMYC) threads the bilayer. Residues 206–272 (RVYVVAKRES…KFSREKKAAK (67 aa)) lie on the Cytoplasmic side of the membrane. Residues 273-297 (TLGIVVGCFVLCWLPFFLVMPIGSF) form a helical membrane-spanning segment. Residues 298–304 (FPDFKPP) lie on the Extracellular side of the membrane. A helical transmembrane segment spans residues 305–329 (ETVFKIVFWLGYLNSCINPIIYPCS). Over 330 to 466 (SQEFKKAFQN…ISLSENGEEV (137 aa)) the chain is Cytoplasmic. Residues 334-349 (KKAFQNVLKIQCLRRK) carry the Nuclear localization signal motif. Cys345 carries the S-palmitoyl cysteine lipid modification.

The protein belongs to the G-protein coupled receptor 1 family. Adrenergic receptor subfamily. ADRA1A sub-subfamily. Homo- and heterooligomer. Heterooligomerizes with ADRA1B homooligomers in cardiac myocytes. Interacts with CAVIN4. In terms of tissue distribution, abundant in liver, vas deferens, brain, and aorta, but not in heart.

It is found in the nucleus membrane. It localises to the cell membrane. The protein localises to the cytoplasm. Its subcellular location is the membrane. The protein resides in the caveola. Its function is as follows. This alpha-adrenergic receptor mediates its action by association with G proteins that activate a phosphatidylinositol-calcium second messenger system. Its effect is mediated by G(q) and G(11) proteins. Nuclear ADRA1A-ADRA1B heterooligomers regulate phenylephrine (PE)-stimulated ERK signaling in cardiac myocytes. In Oryctolagus cuniculus (Rabbit), this protein is Alpha-1A adrenergic receptor (ADRA1A).